Reading from the N-terminus, the 152-residue chain is Deoxyuridine 5'-triphosphate nucleotidohydrolase (152 aa).

Residues 71-73 (RSG), Asn84, and 88-90 (LID) contribute to the substrate site.

Belongs to the dUTPase family. Mg(2+) is required as a cofactor.

The enzyme catalyses dUTP + H2O = dUMP + diphosphate + H(+). Its pathway is pyrimidine metabolism; dUMP biosynthesis; dUMP from dCTP (dUTP route): step 2/2. Its function is as follows. This enzyme is involved in nucleotide metabolism: it produces dUMP, the immediate precursor of thymidine nucleotides and it decreases the intracellular concentration of dUTP so that uracil cannot be incorporated into DNA. The polypeptide is Deoxyuridine 5'-triphosphate nucleotidohydrolase (Xanthomonas campestris pv. campestris (strain 8004)).